The chain runs to 243 residues: Probable transcriptional regulatory protein Ldb0677 (243 aa).

The interval M1 to G22 is disordered.

It belongs to the TACO1 family.

The protein localises to the cytoplasm. In Lactobacillus delbrueckii subsp. bulgaricus (strain ATCC 11842 / DSM 20081 / BCRC 10696 / JCM 1002 / NBRC 13953 / NCIMB 11778 / NCTC 12712 / WDCM 00102 / Lb 14), this protein is Probable transcriptional regulatory protein Ldb0677.